The following is a 291-amino-acid chain: Verruculogen synthase (291 aa).

Residue Tyr68 is part of the active site.

It belongs to the PhyH family. Homodimer. It depends on Fe cation as a cofactor.

The catalysed reaction is fumitremorgin B + 2-oxoglutarate + AH2 + 2 O2 = verruculogen + succinate + A + CO2 + H2O. It functions in the pathway mycotoxin biosynthesis. Verruculogen synthase; part of the gene cluster that mediates the biosynthesis of fumitremorgins, indole alkaloids that carry not only intriguing chemical structures, but also interesting biological and pharmacological activities. The biosynthesis of fumitremorgin-type alkaloids begins by condensation of the two amino acids L-tryptophan and L-proline to brevianamide F, catalyzed by the non-ribosomal peptide synthetase ftmA. Brevianamide F is then prenylated by the prenyltransferase ftmPT1/ftmB in the presence of dimethylallyl diphosphate, resulting in the formation of tryprostatin B. The three cytochrome P450 monooxygenases, ftmP450-1/ftmC, ftmP450-2/ftmE and ftmP450-3/FtmG, are responsible for the conversion of tryprostatin B to 6-hydroxytryprostatin B, tryprostatin A to fumitremorgin C and fumitremorgin C to 12,13-dihydroxyfumitremorgin C, respectively. The putative methyltransferase ftmMT/ftmD is expected for the conversion of 6-hydroxytryprostatin B to tryprostatin A. FtmPT2/FtmH catalyzes the prenylation of 12,13-dihydroxyfumitre-morgin C in the presence of dimethylallyl diphosphate, resulting in the formation of fumitremorgin B. Fumitremorgin B is further converted to verruculogen by ftmOx1/ftmF via the insertion of an endoperoxide bond between the two prenyl moieties. In some fungal species, verruculogen is further converted to fumitremorgin A, but the enzymes involved in this step have not been identified yet. The protein is Verruculogen synthase of Aspergillus fumigatus (strain ATCC MYA-4609 / CBS 101355 / FGSC A1100 / Af293) (Neosartorya fumigata).